Consider the following 137-residue polypeptide: Ribosomal RNA large subunit methyltransferase H (137 aa).

S-adenosyl-L-methionine contacts are provided by residues Leu56, Gly85, and 104–109; that span reads LSPLTF.

The protein belongs to the RNA methyltransferase RlmH family. As to quaternary structure, homodimer.

It is found in the cytoplasm. The catalysed reaction is pseudouridine(1915) in 23S rRNA + S-adenosyl-L-methionine = N(3)-methylpseudouridine(1915) in 23S rRNA + S-adenosyl-L-homocysteine + H(+). In terms of biological role, specifically methylates the pseudouridine at position 1915 (m3Psi1915) in 23S rRNA. This Prochlorococcus marinus subsp. pastoris (strain CCMP1986 / NIES-2087 / MED4) protein is Ribosomal RNA large subunit methyltransferase H.